The following is a 230-amino-acid chain: Ubiquitin carboxyl-terminal hydrolase isozyme L3 (230 aa).

In terms of domain architecture, UCH catalytic spans R5 to A229. Residues P8 to P13 form an interaction with ubiquitin region. C95 (nucleophile) is an active-site residue. A Phosphoserine modification is found at S130. The tract at residues A152–A159 is interaction with ubiquitin. Crossover loop which restricts access of large ubiquitin adducts to the active site. The active-site Proton donor is H169. The interaction with ubiquitin stretch occupies residues E219–A224.

Belongs to the peptidase C12 family. As to quaternary structure, preferentially binds diubiquitin; the interaction does not hydrolyze diubiquitin but, in vitro, inhibits the hydrolyzing activity on other substrates.

It localises to the cytoplasm. It carries out the reaction Thiol-dependent hydrolysis of ester, thioester, amide, peptide and isopeptide bonds formed by the C-terminal Gly of ubiquitin (a 76-residue protein attached to proteins as an intracellular targeting signal).. Inhibited by monoubiquitin and diubiquitin. Functionally, deubiquitinating enzyme (DUB) that controls levels of cellular ubiquitin through processing of ubiquitin precursors and ubiquitinated proteins. Thiol protease that recognizes and hydrolyzes a peptide bond at the C-terminal glycine of either ubiquitin or NEDD8. Has a 10-fold preference for Arg and Lys at position P3, and exhibits a preference towards 'Lys-48'-linked ubiquitin chains. Deubiquitinates ENAC in apical compartments, thereby regulating apical membrane recycling. Indirectly increases the phosphorylation of IGFIR, AKT and FOXO1 and promotes insulin-signaling and insulin-induced adipogenesis. Required for stress-response retinal, skeletal muscle and germ cell maintenance. May be involved in working memory. Can hydrolyze UBB(+1), a mutated form of ubiquitin which is not effectively degraded by the proteasome. This chain is Ubiquitin carboxyl-terminal hydrolase isozyme L3 (UCHL3), found in Sus scrofa (Pig).